Reading from the N-terminus, the 206-residue chain is Photosynthetic reaction center cytochrome c-551 (206 aa).

3 helical membrane-spanning segments follow: residues 10-30 (IALA…VSFL), 49-69 (FMGW…LGKM), and 76-96 (KWFL…FFSL). 4 residues coordinate heme: Cys-152, Cys-155, His-156, and Met-182.

As to quaternary structure, component of the photosynthetic reaction center. The reaction center interacts with the Fenna-Matthews-Olson (FMO, fmoA) complex. In terms of processing, binds 1 heme group per subunit.

The protein localises to the cell inner membrane. In terms of biological role, monoheme cytochrome which is the immediate electron donor to P840 of the photosynthetic reaction center complex. The chain is Photosynthetic reaction center cytochrome c-551 (pscC) from Chlorobaculum parvum (strain DSM 263 / NCIMB 8327) (Chlorobium vibrioforme subsp. thiosulfatophilum).